Here is a 239-residue protein sequence, read N- to C-terminus: Cysteine-rich venom protein ENH1 (239 aa).

An N-terminal signal peptide occupies residues 1–18; that stretch reads MIVFILLSLAAVLQQFVA. Positions 37-165 constitute an SCP domain; the sequence is VDMHNSFRRS…PYNYFYVCQY (129 aa). 7 disulfides stabilise this stretch: C74/C152, C91/C166, C147/C163, C185/C192, C188/C197, C210/C228, and C219/C232. Residues 201–234 form the ShKT domain; that stretch reads CPITNTFTNCDSLLQQNSCEDSYIKTNCGASCFC.

Belongs to the CRISP family. As to expression, expressed by the venom gland.

Its subcellular location is the secreted. Functionally, blocks contraction of smooth muscle elicited by high potassium-induced depolarization, but does not block caffeine-stimulated contraction. May target voltage-gated calcium channels on smooth muscle. The chain is Cysteine-rich venom protein ENH1 from Pseudoferania polylepis (Macleay's water snake).